Consider the following 170-residue polypeptide: tRNA-splicing endonuclease (170 aa).

Catalysis depends on residues Y110, H116, and K147.

Belongs to the tRNA-intron endonuclease family. Archaeal short subfamily. In terms of assembly, homotetramer; although the tetramer contains four active sites, only two participate in the cleavage. Therefore, it should be considered as a dimer of dimers.

The catalysed reaction is pretRNA = a 3'-half-tRNA molecule with a 5'-OH end + a 5'-half-tRNA molecule with a 2',3'-cyclic phosphate end + an intron with a 2',3'-cyclic phosphate and a 5'-hydroxyl terminus.. In terms of biological role, endonuclease that removes tRNA introns. Cleaves pre-tRNA at the 5'- and 3'-splice sites to release the intron. The products are an intron and two tRNA half-molecules bearing 2',3' cyclic phosphate and 5'-OH termini. Recognizes a pseudosymmetric substrate in which 2 bulged loops of 3 bases are separated by a stem of 4 bp. The polypeptide is tRNA-splicing endonuclease (Pyrococcus horikoshii (strain ATCC 700860 / DSM 12428 / JCM 9974 / NBRC 100139 / OT-3)).